We begin with the raw amino-acid sequence, 183 residues long: Adenine phosphoribosyltransferase (183 aa).

This sequence belongs to the purine/pyrimidine phosphoribosyltransferase family. In terms of assembly, homodimer.

The protein localises to the cytoplasm. It catalyses the reaction AMP + diphosphate = 5-phospho-alpha-D-ribose 1-diphosphate + adenine. The protein operates within purine metabolism; AMP biosynthesis via salvage pathway; AMP from adenine: step 1/1. In terms of biological role, catalyzes a salvage reaction resulting in the formation of AMP, that is energically less costly than de novo synthesis. The polypeptide is Adenine phosphoribosyltransferase (Shewanella pealeana (strain ATCC 700345 / ANG-SQ1)).